The chain runs to 138 residues: Putative pre-16S rRNA nuclease (138 aa).

Belongs to the YqgF nuclease family.

It localises to the cytoplasm. Functionally, could be a nuclease involved in processing of the 5'-end of pre-16S rRNA. This is Putative pre-16S rRNA nuclease from Bacteroides fragilis (strain ATCC 25285 / DSM 2151 / CCUG 4856 / JCM 11019 / LMG 10263 / NCTC 9343 / Onslow / VPI 2553 / EN-2).